A 582-amino-acid chain; its full sequence is Phosphoribosylaminoimidazole carboxylase (582 aa).

Residues 114–305 (KKYLAERGVA…QFENHLRAIL (192 aa)) enclose the ATP-grasp domain. 143 to 200 (AGRLGLPLMLKAKTLAYDGRGNSPLKSASSGDIQASLKFLGDRPLYAEGWAPFVKEVA) provides a ligand contact to ATP.

It in the C-terminal section; belongs to the AIR carboxylase family. Class I subfamily.

The catalysed reaction is 5-amino-1-(5-phospho-D-ribosyl)imidazole-4-carboxylate + H(+) = 5-amino-1-(5-phospho-beta-D-ribosyl)imidazole + CO2. Its pathway is purine metabolism; IMP biosynthesis via de novo pathway; 5-amino-1-(5-phospho-D-ribosyl)imidazole-4-carboxylate from 5-amino-1-(5-phospho-D-ribosyl)imidazole (carboxylase route): step 1/1. The polypeptide is Phosphoribosylaminoimidazole carboxylase (ADE2) (Cryptococcus neoformans var. neoformans serotype D (strain JEC21 / ATCC MYA-565) (Filobasidiella neoformans)).